The primary structure comprises 195 residues: MDRKFEVSRKTGETDITLSINIDGSGKSNISTGVGFFDHMLNLFAKHGLFDLDVKAKGDLEIDAHHTVEDVGIVLGQAIKQALGEKKSIRRYGSSFVPMDEALVLVALDLSGRPYLVFDAELKCEKLGNMETELVEEFFRAVAFNAGITLHVKALYGSNTHHIIEAMFKAFGRALDDATRKDDRIEGVMSTKGML.

This sequence belongs to the imidazoleglycerol-phosphate dehydratase family.

The protein localises to the cytoplasm. The enzyme catalyses D-erythro-1-(imidazol-4-yl)glycerol 3-phosphate = 3-(imidazol-4-yl)-2-oxopropyl phosphate + H2O. The protein operates within amino-acid biosynthesis; L-histidine biosynthesis; L-histidine from 5-phospho-alpha-D-ribose 1-diphosphate: step 6/9. The sequence is that of Imidazoleglycerol-phosphate dehydratase from Acetivibrio thermocellus (strain ATCC 27405 / DSM 1237 / JCM 9322 / NBRC 103400 / NCIMB 10682 / NRRL B-4536 / VPI 7372) (Clostridium thermocellum).